The primary structure comprises 254 residues: Alcohol dehydrogenase (254 aa).

10-33 is an NAD(+) binding site; the sequence is FVAGLGGIGLDTSREIVKSGPKNL. Ser138 serves as a coordination point for substrate. Tyr151 (proton acceptor) is an active-site residue.

This sequence belongs to the short-chain dehydrogenases/reductases (SDR) family. In terms of assembly, homodimer.

It carries out the reaction a primary alcohol + NAD(+) = an aldehyde + NADH + H(+). The catalysed reaction is a secondary alcohol + NAD(+) = a ketone + NADH + H(+). In Drosophila affinidisjuncta (Fruit fly), this protein is Alcohol dehydrogenase (Adh).